Consider the following 80-residue polypeptide: Metallothionein-like protein type 2 (80 aa).

It belongs to the metallothionein superfamily. Type 15 family.

In terms of biological role, metallothioneins have a high content of cysteine residues that bind various heavy metals. The sequence is that of Metallothionein-like protein type 2 (MTI) from Ricinus communis (Castor bean).